The chain runs to 282 residues: DegV domain-containing protein SpyM3_0586 (282 aa).

The DegV domain occupies 3 to 280; the sequence is LAVITDSTAT…EGAIAFGVTP (278 aa). 2 residues coordinate hexadecanoate: Thr-61 and Ser-94.

May bind long-chain fatty acids, such as palmitate, and may play a role in lipid transport or fatty acid metabolism. In Streptococcus pyogenes serotype M3 (strain ATCC BAA-595 / MGAS315), this protein is DegV domain-containing protein SpyM3_0586.